The primary structure comprises 85 residues: Antibacterial factor-related peptide 2 (85 aa).

Residues 1–17 form the signal peptide; it reads MFVRSLFLALLLATIVA. A propeptide spanning residues 82 to 85 is cleaved from the precursor; the sequence is IKRG.

In terms of tissue distribution, expressed in the pharynx (at protein level). Detected in pharyngeal neurons and secretory cells.

Its subcellular location is the secreted. Its function is as follows. Exhibits antimicrobial activity against the Gram-positive bacteria B.subtilis IFO 3134, K.varians MAFF 118076 and S.aureus ATCC 6538P, the Gram-negative bacteria A.tumefaciens MAFF 1001, B.bacteriovorus MAFF 106101 and K.pneumoniae MAFF 519002, and the yeasts C.krusei MAFF 114085, K.thermotolerans MAFF 113848 and T.delbrueckii MAFF 113811. The protein is Antibacterial factor-related peptide 2 of Caenorhabditis elegans.